The sequence spans 136 residues: Large ribosomal subunit protein uL16 (136 aa).

The protein belongs to the universal ribosomal protein uL16 family. As to quaternary structure, part of the 50S ribosomal subunit.

Functionally, binds 23S rRNA and is also seen to make contacts with the A and possibly P site tRNAs. This Orientia tsutsugamushi (strain Ikeda) (Rickettsia tsutsugamushi) protein is Large ribosomal subunit protein uL16.